We begin with the raw amino-acid sequence, 187 residues long: ATP synthase subunit delta, chloroplastic (187 aa).

It belongs to the ATPase delta chain family. As to quaternary structure, F-type ATPases have 2 components, F(1) - the catalytic core - and F(0) - the membrane proton channel. F(1) has five subunits: alpha(3), beta(3), gamma(1), delta(1), epsilon(1). CF(0) has four main subunits: a(1), b(1), b'(1) and c(10-14). The alpha and beta chains form an alternating ring which encloses part of the gamma chain. F(1) is attached to F(0) by a central stalk formed by the gamma and epsilon chains, while a peripheral stalk is formed by the delta, b and b' chains.

The protein resides in the plastid. It localises to the chloroplast thylakoid membrane. In terms of biological role, f(1)F(0) ATP synthase produces ATP from ADP in the presence of a proton or sodium gradient. F-type ATPases consist of two structural domains, F(1) containing the extramembraneous catalytic core and F(0) containing the membrane proton channel, linked together by a central stalk and a peripheral stalk. During catalysis, ATP synthesis in the catalytic domain of F(1) is coupled via a rotary mechanism of the central stalk subunits to proton translocation. Functionally, this protein is part of the stalk that links CF(0) to CF(1). It either transmits conformational changes from CF(0) to CF(1) or is implicated in proton conduction. The chain is ATP synthase subunit delta, chloroplastic from Trieres chinensis (Marine centric diatom).